A 72-amino-acid chain; its full sequence is Exodeoxyribonuclease 7 small subunit (72 aa).

It belongs to the XseB family. As to quaternary structure, heterooligomer composed of large and small subunits.

The protein localises to the cytoplasm. It carries out the reaction Exonucleolytic cleavage in either 5'- to 3'- or 3'- to 5'-direction to yield nucleoside 5'-phosphates.. In terms of biological role, bidirectionally degrades single-stranded DNA into large acid-insoluble oligonucleotides, which are then degraded further into small acid-soluble oligonucleotides. This is Exodeoxyribonuclease 7 small subunit from Clostridium kluyveri (strain NBRC 12016).